Here is a 467-residue protein sequence, read N- to C-terminus: Repressible acid phosphatase (467 aa).

An N-terminal signal peptide occupies residues 1–17 (MFKSVVYSILAASLANA). Catalysis depends on H75, which acts as the Nucleophile. 6 N-linked (GlcNAc...) asparagine glycosylation sites follow: N97, N103, N162, N192, N250, and N315. The active-site Proton donor is the D338. N-linked (GlcNAc...) asparagine glycosylation is found at N356, N390, N439, N445, N456, and N461.

This sequence belongs to the histidine acid phosphatase family. In terms of processing, glycosylated during secretion across the membrane.

The protein resides in the secreted. It catalyses the reaction a phosphate monoester + H2O = an alcohol + phosphate. In terms of biological role, partially mediates extracellular nucleotide derived phosphate hydrolysis along with NPP1 and NPP2. The polypeptide is Repressible acid phosphatase (PHO5) (Saccharomyces cerevisiae (strain ATCC 204508 / S288c) (Baker's yeast)).